Reading from the N-terminus, the 239-residue chain is Type III pantothenate kinase (239 aa).

Residue 6 to 13 (DAGNTRLK) participates in ATP binding. Substrate-binding positions include tyrosine 87 and 94 to 97 (GADR). Aspartate 96 serves as the catalytic Proton acceptor. An ATP-binding site is contributed by threonine 119. Substrate is bound at residue serine 169.

Belongs to the type III pantothenate kinase family. As to quaternary structure, homodimer. NH4(+) serves as cofactor. The cofactor is K(+).

It localises to the cytoplasm. The catalysed reaction is (R)-pantothenate + ATP = (R)-4'-phosphopantothenate + ADP + H(+). The protein operates within cofactor biosynthesis; coenzyme A biosynthesis; CoA from (R)-pantothenate: step 1/5. Its function is as follows. Catalyzes the phosphorylation of pantothenate (Pan), the first step in CoA biosynthesis. The sequence is that of Type III pantothenate kinase from Laribacter hongkongensis (strain HLHK9).